A 177-amino-acid chain; its full sequence is Large ribosomal subunit protein uL6 (177 aa).

The protein belongs to the universal ribosomal protein uL6 family. As to quaternary structure, part of the 50S ribosomal subunit.

Functionally, this protein binds to the 23S rRNA, and is important in its secondary structure. It is located near the subunit interface in the base of the L7/L12 stalk, and near the tRNA binding site of the peptidyltransferase center. The sequence is that of Large ribosomal subunit protein uL6 from Rhizobium etli (strain CIAT 652).